Reading from the N-terminus, the 387-residue chain is Diphthine methyltransferase (387 aa).

WD repeat units lie at residues 62-102 (NTYG…KDDF), 119-159 (EKDV…VQFT), 195-237 (PHEL…FIWS), 241-286 (IHDA…ESIF), and 357-387 (GHDS…TWIV).

Belongs to the DPH7 family. Interacts with CAN1 and RTT10.

The protein resides in the cytoplasm. Its subcellular location is the endosome. The enzyme catalyses diphthine methyl ester-[translation elongation factor 2] + H2O = diphthine-[translation elongation factor 2] + methanol + H(+). It participates in protein modification; peptidyl-diphthamide biosynthesis. Functionally, catalyzes the demethylation of diphthine methyl ester to form diphthine, an intermediate in diphthamide biosynthesis, a post-translational modification of histidine which occurs in translation elongation factor 2 (EFT1 and EFT2). Also plays a role in the regulation of the retromer complex and is required for the recycling from endosomes of plasma membrane proteins like CAN1 and MUP1. Identified in a screen for mutants with decreased levels of rDNA transcription. The sequence is that of Diphthine methyltransferase (RRT2) from Saccharomyces cerevisiae (strain ATCC 204508 / S288c) (Baker's yeast).